Consider the following 506-residue polypeptide: Histidine ammonia-lyase (506 aa).

Residues 143–145 constitute a cross-link (5-imidazolinone (Ala-Gly)); it reads ASG. Ser144 is modified (2,3-didehydroalanine (Ser)).

It belongs to the PAL/histidase family. In terms of processing, contains an active site 4-methylidene-imidazol-5-one (MIO), which is formed autocatalytically by cyclization and dehydration of residues Ala-Ser-Gly.

It is found in the cytoplasm. The catalysed reaction is L-histidine = trans-urocanate + NH4(+). Its pathway is amino-acid degradation; L-histidine degradation into L-glutamate; N-formimidoyl-L-glutamate from L-histidine: step 1/3. The sequence is that of Histidine ammonia-lyase from Salmonella gallinarum (strain 287/91 / NCTC 13346).